The sequence spans 131 residues: Small ribosomal subunit protein uS8 (131 aa).

The protein belongs to the universal ribosomal protein uS8 family. Part of the 30S ribosomal subunit. Contacts proteins S5 and S12.

In terms of biological role, one of the primary rRNA binding proteins, it binds directly to 16S rRNA central domain where it helps coordinate assembly of the platform of the 30S subunit. In Solibacter usitatus (strain Ellin6076), this protein is Small ribosomal subunit protein uS8.